Here is a 409-residue protein sequence, read N- to C-terminus: Ubiquitin-associated domain-containing protein 1 (409 aa).

Methionine 1 carries the post-translational modification N-acetylmethionine. The 85-residue stretch at 14-98 folds into the Ubiquitin-like domain; that stretch reads LRLHICAADG…LLLIKKRAPS (85 aa). The region spanning 187 to 231 is the UBA 1 domain; that stretch reads DEDERVDETALRQLTEMGFPESRASKALRLNHMSVPQAMEWLIEH. Residues 235 to 273 form a disordered region; the sequence is PAIDTPLPGHAAQAEASAAAATSSSSSEAAVGTSVEDEE. Residues 245-264 show a composition bias toward low complexity; sequence AAQAEASAAAATSSSSSEAA. Residues 292-332 form the UBA 2 domain; it reads RADARAVISLMEMGFDEKEVIDALRVNNNQQNAACEWLLGD. In terms of domain architecture, STI1 spans 357–396; that stretch reads NPVVQLGLTNPKTLLAFEDMLENPLNSTQWMNDPETGPVM.

As to quaternary structure, component of the KPC complex composed of RNF123/KPC1 and UBAC1/KPC2. Interacts (via ubiquitin-like domain) with RNF123. Interacts (via ubiquitin-like and UBA domains) with the proteasome via its N-terminal domain.

It localises to the cytoplasm. Its pathway is protein modification; protein ubiquitination. Its function is as follows. Non-catalytic component of the KPC complex, a E3 ubiquitin-protein ligase complex that mediates polyubiquitination of target proteins, such as CDKN1B and NFKB1. The KPC complex catalyzes polyubiquitination and proteasome-mediated degradation of CDKN1B during G1 phase of the cell cycle. The KPC complex also acts as a key regulator of the NF-kappa-B signaling by promoting maturation of the NFKB1 component of NF-kappa-B by catalyzing ubiquitination of the NFKB1 p105 precursor. Within the KPC complex, UBAC1 acts as an adapter that promotes the transfer of target proteins that have been polyubiquitinated by RNF123/KPC1 to the 26S proteasome. The protein is Ubiquitin-associated domain-containing protein 1 (Ubac1) of Rattus norvegicus (Rat).